Reading from the N-terminus, the 82-residue chain is MGIFDWKHWIVILIVVVLVFGTKRLKNLGSDVGEAIKGFRKAVNTEEDDKKDQPAAQPAQPLNQPHTIDAQAQKVEEPARKD.

A helical membrane pass occupies residues 1–21 (MGIFDWKHWIVILIVVVLVFG). Residues 43-82 (VNTEEDDKKDQPAAQPAQPLNQPHTIDAQAQKVEEPARKD) form a disordered region.

The protein belongs to the TatA/E family. The Tat system comprises two distinct complexes: a TatABC complex, containing multiple copies of TatA, TatB and TatC subunits, and a separate TatA complex, containing only TatA subunits. Substrates initially bind to the TatABC complex, which probably triggers association of the separate TatA complex to form the active translocon.

It is found in the cell inner membrane. Its function is as follows. Part of the twin-arginine translocation (Tat) system that transports large folded proteins containing a characteristic twin-arginine motif in their signal peptide across membranes. TatA could form the protein-conducting channel of the Tat system. This chain is Sec-independent protein translocase protein TatA, found in Pseudomonas aeruginosa (strain LESB58).